Here is a 357-residue protein sequence, read N- to C-terminus: Hemolysin VllY (357 aa).

2 VOC domains span residues 12–132 (GFEF…FVDR) and 162–313 (EIDH…IFTQ). Residues H165, H243, and E322 each contribute to the Fe cation site.

The protein belongs to the 4HPPD family. It depends on Fe cation as a cofactor.

The chain is Hemolysin VllY (vllY) from Vibrio vulnificus (strain CMCP6).